A 560-amino-acid polypeptide reads, in one-letter code: Serine palmitoyltransferase 2 (560 aa).

A helical membrane pass occupies residues 65-85 (PMLVAVLTYVGYGVLTLFGYL). Lysine 377 bears the N6-(pyridoxal phosphate)lysine mark.

The protein belongs to the class-II pyridoxal-phosphate-dependent aminotransferase family. Component of the serine palmitoyltransferase (SPT) complex, which is composed of SPTLC1, SPTLC2 or SPTLC3 and SPTSSA or SPTSSB. The heterodimer consisting of SPTLC1 and SPTLC2/SPTLC3 forms the catalytic core of the enzyme, while SPTSSA or SPTSSB subunits determine substrate specificity. SPT also interacts with ORMDL proteins, especially ORMDL3, which negatively regulate SPT activity in the presence of ceramides. Forms dimers of heterodimers with SPTLC1. Requires pyridoxal 5'-phosphate as cofactor. As to expression, expressed in a variety of tissues. Expressed in brains cortices (at protein level). Expressed in brown and white adipose tissues. Expressed in liver.

Its subcellular location is the endoplasmic reticulum membrane. The enzyme catalyses L-serine + hexadecanoyl-CoA + H(+) = 3-oxosphinganine + CO2 + CoA. It carries out the reaction octadecanoyl-CoA + L-serine + H(+) = 3-oxoeicosasphinganine + CO2 + CoA. It participates in lipid metabolism; sphingolipid metabolism. SPT complex catalytic activity is negatively regulated by ORMDL proteins, including ORMDL3, in the presence of ceramides. This mechanism allows to maintain ceramide levels at sufficient concentrations for the production of complex sphingolipids, but which prevents the accumulation of ceramides to levels that trigger apoptosis. Functionally, component of the serine palmitoyltransferase multisubunit enzyme (SPT) that catalyzes the initial and rate-limiting step in sphingolipid biosynthesis by condensing L-serine and activated acyl-CoA (most commonly palmitoyl-CoA) to form long-chain bases. The SPT complex is composed of SPTLC1, SPTLC2 or SPTLC3 and SPTSSA or SPTSSB. Within this complex, the heterodimer consisting of SPTLC1 and SPTLC2/SPTLC3 forms the catalytic core. The composition of the serine palmitoyltransferase (SPT) complex determines the substrate preference. The SPTLC1-SPTLC2-SPTSSA complex shows a strong preference for C16-CoA substrate, while the SPTLC1-SPTLC3-SPTSSA isozyme uses both C14-CoA and C16-CoA as substrates, with a slight preference for C14-CoA. The SPTLC1-SPTLC2-SPTSSB complex shows a strong preference for C18-CoA substrate, while the SPTLC1-SPTLC3-SPTSSB isozyme displays an ability to use a broader range of acyl-CoAs, without apparent preference. Crucial for adipogenesis. In Mus musculus (Mouse), this protein is Serine palmitoyltransferase 2.